The primary structure comprises 170 residues: Type II secretion system protein H (170 aa).

Positions 1-5 are cleaved as a propeptide — leader sequence; it reads MRQRG. N-methylphenylalanine is present on F6. Residues 6-29 traverse the membrane as a helical segment; it reads FTLLEMMLILLLMGVSAGMVLLAF.

It belongs to the GSP H family. In terms of assembly, type II secretion is composed of four main components: the outer membrane complex, the inner membrane complex, the cytoplasmic secretion ATPase and the periplasm-spanning pseudopilus. Interacts with core component PulG. In terms of processing, cleaved by prepilin peptidase. Post-translationally, methylated by prepilin peptidase at the amino group of the N-terminal phenylalanine once the leader sequence is cleaved by prepilin peptidase.

It localises to the cell inner membrane. Its function is as follows. Component of the type II secretion system required for the energy-dependent secretion of extracellular factors such as proteases and toxins from the periplasm. Part of the pseudopilus tip complex that is critical for the recognition and binding of secretion substrates. The polypeptide is Type II secretion system protein H (pulH) (Klebsiella pneumoniae).